We begin with the raw amino-acid sequence, 104 residues long: Large ribosomal subunit protein uL24 (104 aa).

The protein belongs to the universal ribosomal protein uL24 family. In terms of assembly, part of the 50S ribosomal subunit.

One of two assembly initiator proteins, it binds directly to the 5'-end of the 23S rRNA, where it nucleates assembly of the 50S subunit. Functionally, one of the proteins that surrounds the polypeptide exit tunnel on the outside of the subunit. The chain is Large ribosomal subunit protein uL24 from Serratia proteamaculans (strain 568).